The sequence spans 353 residues: UDP-N-acetylglucosamine--N-acetylmuramyl-(pentapeptide) pyrophosphoryl-undecaprenol N-acetylglucosamine transferase (353 aa).

UDP-N-acetyl-alpha-D-glucosamine contacts are provided by residues 11–13 (SAG), Arg164, Ser194, and Gln289.

This sequence belongs to the glycosyltransferase 28 family. MurG subfamily.

The protein localises to the cell membrane. It catalyses the reaction di-trans,octa-cis-undecaprenyl diphospho-N-acetyl-alpha-D-muramoyl-L-alanyl-D-glutamyl-meso-2,6-diaminopimeloyl-D-alanyl-D-alanine + UDP-N-acetyl-alpha-D-glucosamine = di-trans,octa-cis-undecaprenyl diphospho-[N-acetyl-alpha-D-glucosaminyl-(1-&gt;4)]-N-acetyl-alpha-D-muramoyl-L-alanyl-D-glutamyl-meso-2,6-diaminopimeloyl-D-alanyl-D-alanine + UDP + H(+). It participates in cell wall biogenesis; peptidoglycan biosynthesis. In terms of biological role, cell wall formation. Catalyzes the transfer of a GlcNAc subunit on undecaprenyl-pyrophosphoryl-MurNAc-pentapeptide (lipid intermediate I) to form undecaprenyl-pyrophosphoryl-MurNAc-(pentapeptide)GlcNAc (lipid intermediate II). This chain is UDP-N-acetylglucosamine--N-acetylmuramyl-(pentapeptide) pyrophosphoryl-undecaprenol N-acetylglucosamine transferase, found in Clostridium kluyveri (strain ATCC 8527 / DSM 555 / NBRC 12016 / NCIMB 10680 / K1).